The following is a 561-amino-acid chain: Phosphoinositide phospholipase C 1 (561 aa).

The 34-residue stretch at 21–54 folds into the EF-hand domain; it reads EPPEEIKNLFHDYSQDDRMSADEMLRFVIQVQGE. The region spanning 105–249 is the PI-PLC X-box domain; that stretch reads QDMNQPLSHY…LKNKILISTK (145 aa). Residues His-120 and His-166 contribute to the active site. Over residues 256-266 the composition is skewed to polar residues; the sequence is QTQISKGSTTD. The segment at 256-285 is disordered; sequence QTQISKGSTTDESTRAKKISDAEEQVQEED. The segment covering 267–276 has biased composition (basic and acidic residues); the sequence is ESTRAKKISD. Positions 294–410 constitute a PI-PLC Y-box domain; the sequence is RDLISIHAGN…GYVKKPDVLL (117 aa). The C2 domain occupies 414–541; that stretch reads PEGEIFDPCS…PGIRAVRLHD (128 aa). Residues Asp-452, Asp-458, Asp-510, Asp-512, and Asp-518 each coordinate Ca(2+).

The cofactor is Ca(2+). Expressed in stems, leaves, roots, flowers and siliques. Predominant in the vascular tissues of roots and leaves.

Its subcellular location is the cell membrane. The catalysed reaction is a 1,2-diacyl-sn-glycero-3-phospho-(1D-myo-inositol-4,5-bisphosphate) + H2O = 1D-myo-inositol 1,4,5-trisphosphate + a 1,2-diacyl-sn-glycerol + H(+). The production of the second messenger molecules diacylglycerol (DAG) and inositol 1,4,5-trisphosphate (IP3) is mediated by activated phosphatidylinositol-specific phospholipase C enzymes. Required for secondary responses to abscisic acid signals. This Arabidopsis thaliana (Mouse-ear cress) protein is Phosphoinositide phospholipase C 1 (PLC1).